The sequence spans 180 residues: Adenine phosphoribosyltransferase (180 aa).

It belongs to the purine/pyrimidine phosphoribosyltransferase family. As to quaternary structure, homodimer.

The protein localises to the cytoplasm. It carries out the reaction AMP + diphosphate = 5-phospho-alpha-D-ribose 1-diphosphate + adenine. Its pathway is purine metabolism; AMP biosynthesis via salvage pathway; AMP from adenine: step 1/1. Functionally, catalyzes a salvage reaction resulting in the formation of AMP, that is energically less costly than de novo synthesis. The polypeptide is Adenine phosphoribosyltransferase (Rhizobium meliloti (strain 1021) (Ensifer meliloti)).